A 581-amino-acid chain; its full sequence is A-type ATP synthase subunit A (581 aa).

234–241 (GPFGSGKT) serves as a coordination point for ATP.

This sequence belongs to the ATPase alpha/beta chains family. Has multiple subunits with at least A(3), B(3), C, D, E, F, H, I and proteolipid K(x).

The protein resides in the cell membrane. The catalysed reaction is ATP + H2O + 4 H(+)(in) = ADP + phosphate + 5 H(+)(out). Its function is as follows. Component of the A-type ATP synthase that produces ATP from ADP in the presence of a proton gradient across the membrane. The A chain is the catalytic subunit. The polypeptide is A-type ATP synthase subunit A (Archaeoglobus fulgidus (strain ATCC 49558 / DSM 4304 / JCM 9628 / NBRC 100126 / VC-16)).